Here is a 220-residue protein sequence, read N- to C-terminus: Deoxyribose-phosphate aldolase (220 aa).

D89 functions as the Proton donor/acceptor in the catalytic mechanism. The active-site Schiff-base intermediate with acetaldehyde is the K151. Catalysis depends on K180, which acts as the Proton donor/acceptor.

It belongs to the DeoC/FbaB aldolase family. DeoC type 1 subfamily.

It is found in the cytoplasm. It carries out the reaction 2-deoxy-D-ribose 5-phosphate = D-glyceraldehyde 3-phosphate + acetaldehyde. It functions in the pathway carbohydrate degradation; 2-deoxy-D-ribose 1-phosphate degradation; D-glyceraldehyde 3-phosphate and acetaldehyde from 2-deoxy-alpha-D-ribose 1-phosphate: step 2/2. Its function is as follows. Catalyzes a reversible aldol reaction between acetaldehyde and D-glyceraldehyde 3-phosphate to generate 2-deoxy-D-ribose 5-phosphate. The sequence is that of Deoxyribose-phosphate aldolase from Staphylococcus saprophyticus subsp. saprophyticus (strain ATCC 15305 / DSM 20229 / NCIMB 8711 / NCTC 7292 / S-41).